The sequence spans 938 residues: LPS-assembly protein LptD (938 aa).

The first 33 residues, 1 to 33, serve as a signal peptide directing secretion; sequence MAVKHPAFRKKFPLLVTGSLLALQPAFSLQSFA. The tract at residues 52–96 is disordered; that stretch reads KTATSALPPRPQHSRSAVSTTSGSATATATKQEPAPVLVTESKGR. Low complexity predominate over residues 65-81; that stretch reads SRSAVSTTSGSATATAT.

It belongs to the LptD family. In terms of assembly, component of the lipopolysaccharide transport and assembly complex. Interacts with LptE and LptA.

It is found in the cell outer membrane. Together with LptE, is involved in the assembly of lipopolysaccharide (LPS) at the surface of the outer membrane. The chain is LPS-assembly protein LptD from Ectopseudomonas mendocina (strain ymp) (Pseudomonas mendocina).